The primary structure comprises 356 residues: Isopentenyl-diphosphate delta-isomerase (356 aa).

8-9 lines the substrate pocket; the sequence is RK. FMN is bound by residues 66–68, Ser96, and Asn124; that span reads AIT. 96-98 serves as a coordination point for substrate; sequence SQR. Gln160 contributes to the substrate binding site. Glu161 contacts Mg(2+). FMN contacts are provided by residues Lys201, Thr231, 280–282, and 301–302; these read GIR and AL.

Belongs to the IPP isomerase type 2 family. In terms of assembly, homooctamer. Dimer of tetramers. Requires FMN as cofactor. NADPH serves as cofactor. Mg(2+) is required as a cofactor.

Its subcellular location is the cytoplasm. It catalyses the reaction isopentenyl diphosphate = dimethylallyl diphosphate. Involved in the biosynthesis of isoprenoids. Catalyzes the 1,3-allylic rearrangement of the homoallylic substrate isopentenyl (IPP) to its allylic isomer, dimethylallyl diphosphate (DMAPP). This is Isopentenyl-diphosphate delta-isomerase from Methanococcus aeolicus (strain ATCC BAA-1280 / DSM 17508 / OCM 812 / Nankai-3).